The chain runs to 359 residues: Small ribosomal subunit protein mS22 (359 aa).

This sequence belongs to the mitochondrion-specific ribosomal protein mS22 family. Component of the mitochondrial ribosome small subunit (28S) which comprises a 12S rRNA and about 30 distinct proteins.

It localises to the mitochondrion. The protein is Small ribosomal subunit protein mS22 (MRPS22) of Bos taurus (Bovine).